Reading from the N-terminus, the 128-residue chain is EPIDERMAL PATTERNING FACTOR-like protein 2 (128 aa).

An N-terminal signal peptide occupies residues 1-28; it reads MVWSSNMSSFLLILLILNSTHFSLMANG. 3 disulfides stabilise this stretch: Cys60/Cys119, Cys65/Cys71, and Cys68/Cys121. The segment covering 79 to 90 has biased composition (polar residues); the sequence is NPQTKLHSPLTT. A disordered region spans residues 79 to 100; that stretch reads NPQTKLHSPLTTSSSSSSETIH.

The protein belongs to the plant cysteine rich small secretory peptide family. Epidermal patterning factor subfamily.

Its subcellular location is the secreted. Controls stomatal patterning. This is EPIDERMAL PATTERNING FACTOR-like protein 2 from Arabidopsis thaliana (Mouse-ear cress).